Consider the following 640-residue polypeptide: MGKIIGIDLGTTNSCVAVMEGGKPRVIENAEGARTTPSVIAYQEDGEILVGAPAKRQAVTNPKNTLFAVKRLIGRRFDEKEVQKDIGLMPYTITKADNGDAWVEVRGQKLAPPQISAEVLRKMKKTAEDYLGEEVTEAVITVPAYFNDSQRQATKDAGRIAGLEVKRIINEPTAAALAFGLDKQEGDRKIAVYDLGGGTFDISIIEISEIDGEHQFEVLSTNGDTFLGGEDFDNRLIDFLADEFKKENGIDLRNDLLAKQRLKEAAEKAKIELSSSTQTEVNLPYITADASGPKHLVVKITRAKFESLVEDLIERSIKPCEVALKDAGVKVSDIQDVILVGGQTRMPKVQEKVKEFFGKEPRKDVNPDEAVAVGAAIQGGVLQGDVKDVLLLDVTPLSLGIETLGGVMTKLIQKNTTIPTKASQVFSTAEDNQSAVTIHVLQGEREMASGNKSLGQFNLTDIPPAPRGMPQIEVTFDIDANGILHVSAKDKATGKENKITIKANSGLSDEEIKRMEEEAAKYADEDKKLRELVDARNSADSAIHSVKKSLAEHGDKLDAAEKGAIEKAVQELEDVIKGDDKAAIESKTNALIEASQKLGEKVYAAGETESSAAEPGEPQEKTVDAEVVDAEFEEVKDDKK.

Thr-199 bears the Phosphothreonine; by autocatalysis mark. The interval 603–640 (YAAGETESSAAEPGEPQEKTVDAEVVDAEFEEVKDDKK) is disordered. Positions 626 to 640 (EVVDAEFEEVKDDKK) are enriched in acidic residues.

It belongs to the heat shock protein 70 family.

In terms of biological role, acts as a chaperone. The chain is Chaperone protein DnaK from Methylobacillus flagellatus (strain ATCC 51484 / DSM 6875 / VKM B-1610 / KT).